A 407-amino-acid polypeptide reads, in one-letter code: Argininosuccinate synthase (407 aa).

ATP is bound by residues 16-24 and Ala44; that span reads AYSGGLDTS. L-citrulline-binding residues include Tyr96 and Ser101. Residue Gly126 participates in ATP binding. L-aspartate is bound by residues Thr128, Asn132, and Asp133. Asn132 is an L-citrulline binding site. The L-citrulline site is built by Arg136, Ser185, Ser194, Glu270, and Tyr282.

Belongs to the argininosuccinate synthase family. Type 1 subfamily. In terms of assembly, homotetramer.

It is found in the cytoplasm. It carries out the reaction L-citrulline + L-aspartate + ATP = 2-(N(omega)-L-arginino)succinate + AMP + diphosphate + H(+). The protein operates within amino-acid biosynthesis; L-arginine biosynthesis; L-arginine from L-ornithine and carbamoyl phosphate: step 2/3. The chain is Argininosuccinate synthase from Shewanella sp. (strain ANA-3).